A 97-amino-acid polypeptide reads, in one-letter code: Large ribosomal subunit protein uL30m (97 aa).

This sequence belongs to the universal ribosomal protein uL30 family. In terms of assembly, component of the mitochondrial large ribosomal subunit (mt-LSU). Mature yeast 74S mitochondrial ribosomes consist of a small (37S) and a large (54S) subunit. The 37S small subunit contains a 15S ribosomal RNA (15S mt-rRNA) and at least 32 different proteins. The 54S large subunit contains a 21S rRNA (21S mt-rRNA) and at least 45 different proteins.

The protein resides in the mitochondrion. Its function is as follows. Component of the mitochondrial ribosome (mitoribosome), a dedicated translation machinery responsible for the synthesis of mitochondrial genome-encoded proteins, including at least some of the essential transmembrane subunits of the mitochondrial respiratory chain. The mitoribosomes are attached to the mitochondrial inner membrane and translation products are cotranslationally integrated into the membrane. This Schizosaccharomyces pombe (strain 972 / ATCC 24843) (Fission yeast) protein is Large ribosomal subunit protein uL30m (mrpl33).